The sequence spans 85 residues: U1-ctenitoxin-Pn1a (85 aa).

The first 16 residues, 1-16 (MKVAIVFLSLLVLAFA), serve as a signal peptide directing secretion. Positions 17–34 (SESIEENREEFPVEESAR) are excised as a propeptide. Intrachain disulfides connect Cys-35/Cys-49, Cys-42/Cys-55, Cys-46/Cys-81, Cys-48/Cys-65, and Cys-57/Cys-63. Residues 82 to 85 (QNKI) constitute a propeptide that is removed on maturation.

The protein belongs to the neurotoxin 03 (Tx2) family. 05 subfamily. Expressed by the venom gland.

It localises to the secreted. Its function is as follows. Insecticidal neurotoxin that reversibly inhibits the N-methyl-D-aspartate (NMDA)-subtype of ionotropic glutamate receptor (GRIN) and inhibits inactivation of insect sodium channels (Nav). In vivo, is highly toxic to insects. The sequence is that of U1-ctenitoxin-Pn1a from Phoneutria nigriventer (Brazilian armed spider).